Here is a 1183-residue protein sequence, read N- to C-terminus: DNA-directed RNA polymerase subunit beta (1183 aa).

Residues 1151–1162 are compositionally biased toward acidic residues; it reads EIEMADVDDEDA. The tract at residues 1151–1183 is disordered; that stretch reads EIEMADVDDEDAAERKVDLQQKSAPESQKETTD.

Belongs to the RNA polymerase beta chain family. As to quaternary structure, the RNAP catalytic core consists of 2 alpha, 1 beta, 1 beta' and 1 omega subunit. When a sigma factor is associated with the core the holoenzyme is formed, which can initiate transcription.

The enzyme catalyses RNA(n) + a ribonucleoside 5'-triphosphate = RNA(n+1) + diphosphate. DNA-dependent RNA polymerase catalyzes the transcription of DNA into RNA using the four ribonucleoside triphosphates as substrates. The polypeptide is DNA-directed RNA polymerase subunit beta (Staphylococcus epidermidis (strain ATCC 12228 / FDA PCI 1200)).